A 255-amino-acid polypeptide reads, in one-letter code: 1-(5-phosphoribosyl)-5-[(5-phosphoribosylamino)methylideneamino] imidazole-4-carboxamide isomerase (255 aa).

Asp12 serves as the catalytic Proton acceptor. Asp131 serves as the catalytic Proton donor.

Belongs to the HisA/HisF family.

It is found in the cytoplasm. It carries out the reaction 1-(5-phospho-beta-D-ribosyl)-5-[(5-phospho-beta-D-ribosylamino)methylideneamino]imidazole-4-carboxamide = 5-[(5-phospho-1-deoxy-D-ribulos-1-ylimino)methylamino]-1-(5-phospho-beta-D-ribosyl)imidazole-4-carboxamide. The protein operates within amino-acid biosynthesis; L-histidine biosynthesis; L-histidine from 5-phospho-alpha-D-ribose 1-diphosphate: step 4/9. This chain is 1-(5-phosphoribosyl)-5-[(5-phosphoribosylamino)methylideneamino] imidazole-4-carboxamide isomerase, found in Cutibacterium acnes (strain DSM 16379 / KPA171202) (Propionibacterium acnes).